The primary structure comprises 279 residues: tRNA (carboxymethyluridine(34)-5-O)-methyltransferase (279 aa).

Residues 172–236 (KSKSKPKTKS…QQQDQEQERE (65 aa)) form a disordered region. Positions 200–229 (PKERSEYLQRWKEEQQRSKSLDDNDEKQQQ) are enriched in basic and acidic residues.

As to quaternary structure, interacts with TRM112.

It localises to the cytoplasm. The protein localises to the nucleus. It carries out the reaction 5-(carboxymethyl)uridine(34) in tRNA + S-adenosyl-L-methionine = 5-(2-methoxy-2-oxoethyl)uridine(34) in tRNA + S-adenosyl-L-homocysteine. Its function is as follows. Required for the methylation of the wobble bases at position 34 in tRNA. Appears to have a role in stress-response. The protein is tRNA (carboxymethyluridine(34)-5-O)-methyltransferase (TRM9) of Saccharomyces cerevisiae (strain ATCC 204508 / S288c) (Baker's yeast).